A 442-amino-acid chain; its full sequence is Putative protein YjbI (442 aa).

The protein is Putative protein YjbI (yjbI) of Escherichia coli (strain K12).